The primary structure comprises 90 residues: UPF0223 protein lwe1035 (90 aa).

Belongs to the UPF0223 family.

The chain is UPF0223 protein lwe1035 from Listeria welshimeri serovar 6b (strain ATCC 35897 / DSM 20650 / CCUG 15529 / CIP 8149 / NCTC 11857 / SLCC 5334 / V8).